Here is a 515-residue protein sequence, read N- to C-terminus: Dimethylnonatriene synthase (515 aa).

A helical transmembrane segment spans residues 3–23 (FLFSTLQLSLFSLALVIFGYI). Position 219 (His219) interacts with substrate. Residue Lys252 forms a Glycyl lysine isopeptide (Lys-Gly) (interchain with G-Cter in ubiquitin) linkage. Cys452 contacts heme.

It belongs to the cytochrome P450 family. It depends on heme as a cofactor. As to expression, expressed in stems, flower peduncles, receptacle of developing and mature flowers and in stigma of mature opening flower buds.

It localises to the membrane. The enzyme catalyses (3S,6E)-nerolidol + reduced [NADPH--hemoprotein reductase] + O2 = (3E)-4,8-dimethylnona-1,3,7-triene + but-3-en-2-one + oxidized [NADPH--hemoprotein reductase] + 2 H2O + H(+). The catalysed reaction is (6E,10E)-geranyllinalool + reduced [NADPH--hemoprotein reductase] + O2 = (3E,7E)-4,8,12-trimethyltrideca 1,3,7,11-tetraene + but-3-en-2-one + oxidized [NADPH--hemoprotein reductase] + 2 H2O + H(+). It functions in the pathway secondary metabolite biosynthesis; terpenoid biosynthesis. Its function is as follows. Involved in the biosynthesis of homoterpenes, attractants of herbivores parasitoids and predators (e.g. predatory mites and parasitoid wasps). Catalyzes the conversion of the C20 (E,E)-geranyllinalool to C16-homoterpene 4,8,12-trimethyltrideca-1,3,7,11-tetraene (TMTT) of the C15 (E)-nerolidol to C11-homoterpene (E)-4,8-dimethyl-1,3,7-nonatriene (DMNT); these volatile compounds are produced upon insect herbivore attack and emitted from flowers and vegetative tissues during herbivore feeding. Required during resistance responses to the fungus Alternaria brassicae. Prevents oviposition of the phloem-feeding insect cabbage whitefly (Aleyrodes proletella). The sequence is that of Dimethylnonatriene synthase from Arabidopsis thaliana (Mouse-ear cress).